Consider the following 260-residue polypeptide: Ras-related protein Rab-26 (260 aa).

Residues 1–56 (MSRKKTPKSKGGSEPATSTLPAAAAATNGPRLAHPRTVRPGPEAPPNGPPQSIRPS) form a disordered region. The GTP site is built by Ser76, Gly77, Val78, Gly79, Lys80, Thr81, Cys82, Ser99, and Thr100. Thr81 is a binding site for Mg(2+). 2 short sequence motifs (switch) span residues 90-105 (GAFL…GIDF) and 123-140 (DTAG…YYRD). Positions 100 and 123 each coordinate Mg(2+). Residues Gly126, Asn181, Lys182, Asp184, Ala212, and Arg213 each contribute to the GTP site. 2 S-geranylgeranyl cysteine lipidation sites follow: Cys257 and Cys258.

This sequence belongs to the small GTPase superfamily. Rab family. Interacts with ADRA2B. Interacts with RIMS1. Requires Mg(2+) as cofactor. Detected in zymogenic cells in the stomach.

The protein resides in the cytoplasmic vesicle. The protein localises to the secretory vesicle membrane. Its subcellular location is the golgi apparatus membrane. It catalyses the reaction GTP + H2O = GDP + phosphate + H(+). With respect to regulation, regulated by guanine nucleotide exchange factors (GEFs) which promote the exchange of bound GDP for free GTP. Regulated by GTPase activating proteins (GAPs) which increase the GTP hydrolysis activity. Inhibited by GDP dissociation inhibitors (GDIs). In terms of biological role, the small GTPases Rab are key regulators of intracellular membrane trafficking, from the formation of transport vesicles to their fusion with membranes. Rabs cycle between an inactive GDP-bound form and an active GTP-bound form that is able to recruit to membranes different set of downstream effectors directly responsible for vesicle formation, movement, tethering and fusion. RAB26 mediates transport of ADRA2A and ADRA2B from the Golgi to the cell membrane. Plays a role in the maturation of zymogenic granules and in pepsinogen secretion in the stomach. Plays a role in the secretion of amylase from acinar granules in the parotid gland. The sequence is that of Ras-related protein Rab-26 from Mus musculus (Mouse).